Consider the following 886-residue polypeptide: Leucine--tRNA ligase (886 aa).

The 'HIGH' region motif lies at 51 to 61 (PYPSGRIHMGH). The short motif at 644–648 (KMSKS) is the 'KMSKS' region element. Lys-647 contacts ATP.

The protein belongs to the class-I aminoacyl-tRNA synthetase family.

It localises to the cytoplasm. It catalyses the reaction tRNA(Leu) + L-leucine + ATP = L-leucyl-tRNA(Leu) + AMP + diphosphate. This Bartonella tribocorum (strain CIP 105476 / IBS 506) protein is Leucine--tRNA ligase.